The following is a 146-amino-acid chain: MMDINEIREYLPHRYPFLLVDRVTELDIENKNIRAYKNVSVNEPFFNGHFPQHPIMPGVLIIEAMAQAAGILAFKMLDSKPSDGTLYYFVGSDKLRFRQPVFPGDKLVLEATFLSSKRQIWKFECKATVDGKAVCSAEIICAERKL.

The active site involves His49.

The protein belongs to the thioester dehydratase family. FabZ subfamily.

It localises to the cytoplasm. It carries out the reaction a (3R)-hydroxyacyl-[ACP] = a (2E)-enoyl-[ACP] + H2O. Its function is as follows. Involved in unsaturated fatty acids biosynthesis. Catalyzes the dehydration of short chain beta-hydroxyacyl-ACPs and long chain saturated and unsaturated beta-hydroxyacyl-ACPs. This Pseudomonas syringae pv. tomato (strain ATCC BAA-871 / DC3000) protein is 3-hydroxyacyl-[acyl-carrier-protein] dehydratase FabZ.